Consider the following 506-residue polypeptide: MPDTTPQLRLYNTLTRTKEAFAPIDAKNVRMYVCGPTVYDFAHIGNARPVIVFDVLFRLLRHVYGAQHVTYARNITDVDDKINARAARDYPDLPFNEAIRKVTESTNAQFQADVTALGNLQPTVQPRATEHMDEMRAMIDRLVQRGVAYVAQDHVLFSPSAMNARKGPRYGALARRSLDEMLAGARVDVASYKRDEMDFVLWKPSKKGEPGWPSPAGIETLGRPGWHIECSAMSMAKLLEPFGGGLKCDDPERNQFDIHGGGIDLVFPHHENEIAQSCCALGTERMANIWMHNGFLQVEGQKMSKSLGNFITIRDVLNDGLPQLGEWGDNTVRDHWAGLAARLSMLQTHYREPINWTAQRLAESADELHRWYGLLRDEGFGAPEKLSHASAVAAALCDDLNSWAAITALRQAFKVRDVAALGEGMALMGLLDPYFVTASDVPIFARADVDASAIAARIAERLNFINAKNWAEADRIRDELLQEGVQLKDSKDPATGERITTWDVVG.

Residue cysteine 34 coordinates Zn(2+). The 'HIGH' region signature appears at 36-46 (PTVYDFAHIGN). Cysteine 230, histidine 269, and glutamate 273 together coordinate Zn(2+). Positions 302-306 (KMSKS) match the 'KMSKS' region motif. Lysine 305 is an ATP binding site.

The protein belongs to the class-I aminoacyl-tRNA synthetase family. Monomer. Requires Zn(2+) as cofactor.

The protein localises to the cytoplasm. The enzyme catalyses tRNA(Cys) + L-cysteine + ATP = L-cysteinyl-tRNA(Cys) + AMP + diphosphate. This chain is Cysteine--tRNA ligase, found in Brucella abortus (strain S19).